The following is a 342-amino-acid chain: Protein-ribulosamine 3-kinase, chloroplastic (342 aa).

The transit peptide at 1 to 46 (MANVALLSAASPSTSSAAPRLRHVARRRPSRRSACPRSAASRLSIM) directs the protein to the chloroplast. 141 to 143 (EFI) lines the ATP pocket. Asp-246 serves as the catalytic Proton acceptor.

Belongs to the fructosamine kinase family.

It localises to the plastid. The protein resides in the chloroplast. It catalyses the reaction N(6)-D-ribulosyl-L-lysyl-[protein] + ATP = N(6)-(3-O-phospho-D-ribulosyl)-L-lysyl-[protein] + ADP + H(+). It carries out the reaction N(6)-(D-erythrulosyl)-L-lysyl-[protein] + ATP = N(6)-(3-O-phospho-D-erythrulosyl)-L-lysyl-[protein] + ADP + H(+). Its function is as follows. Initiates a process leading to the deglycation of proteins. Phosphorylates low-molecular-mass and protein-bound erythrulosamines and ribulosamines, but not fructosamines or psicosamines, on the third carbon of the sugar moiety. Protein-bound erythrulosamine 3-phosphates and ribulosamine 3-phosphates are unstable and decompose under physiological conditions. The sequence is that of Protein-ribulosamine 3-kinase, chloroplastic from Oryza sativa subsp. indica (Rice).